The primary structure comprises 166 residues: MSSRTTLGLSAPDLSGLDGSGLKVAVVAAQWHGTVMTGLLDGALRGLVDSGVHDPAVIRVPGSFELPVACASLADHFDALVALGVIIRGGTPHFDYVCDAATRGITDVAVRTKTPIGFGILTCDDEAQALDRAGLEGSHEDKGYEAAQAAIATLTALSTALASGPS.

5-amino-6-(D-ribitylamino)uracil-binding positions include tryptophan 31, 63–65 (SFE), and 85–87 (VII). Residue 90–91 (GT) participates in (2S)-2-hydroxy-3-oxobutyl phosphate binding. The Proton donor role is filled by histidine 93. Phenylalanine 118 is a 5-amino-6-(D-ribitylamino)uracil binding site. Arginine 132 is a (2S)-2-hydroxy-3-oxobutyl phosphate binding site.

It belongs to the DMRL synthase family.

The enzyme catalyses (2S)-2-hydroxy-3-oxobutyl phosphate + 5-amino-6-(D-ribitylamino)uracil = 6,7-dimethyl-8-(1-D-ribityl)lumazine + phosphate + 2 H2O + H(+). It participates in cofactor biosynthesis; riboflavin biosynthesis; riboflavin from 2-hydroxy-3-oxobutyl phosphate and 5-amino-6-(D-ribitylamino)uracil: step 1/2. In terms of biological role, catalyzes the formation of 6,7-dimethyl-8-ribityllumazine by condensation of 5-amino-6-(D-ribitylamino)uracil with 3,4-dihydroxy-2-butanone 4-phosphate. This is the penultimate step in the biosynthesis of riboflavin. In Cutibacterium acnes (strain DSM 16379 / KPA171202) (Propionibacterium acnes), this protein is 6,7-dimethyl-8-ribityllumazine synthase.